Consider the following 222-residue polypeptide: Riboflavin kinase (222 aa).

The segment at 1 to 94 (METIDAEDAA…AKIFDVKDEQ (94 aa)) is H-T-H motif-like. The tract at residues 95–222 (YVLTGTVMSG…ENSEVVVVIG (128 aa)) is riboflavin kinase. Residue 104–109 (GVGEGR) coordinates CDP. Residues Thr-133 and Asn-135 each contribute to the Mg(2+) site. The FMN site is built by Thr-190 and Glu-198. CDP is bound at residue 203 to 206 (TQLR).

The protein belongs to the archaeal riboflavin kinase family. The cofactor is Mg(2+).

The catalysed reaction is riboflavin + CTP = CDP + FMN + H(+). It functions in the pathway cofactor biosynthesis; FMN biosynthesis; FMN from riboflavin (CTP route): step 1/1. Catalyzes the CTP-dependent phosphorylation of riboflavin (vitamin B2) to form flavin mononucleotide (FMN). This Methanocorpusculum labreanum (strain ATCC 43576 / DSM 4855 / Z) protein is Riboflavin kinase (ribK).